Reading from the N-terminus, the 243-residue chain is MASLGVNIDHIANVRQARLASEPEPVQMAFLAELGGADGITVHLREDRRHIQDKDLKLLRATINTRLNLEMAATKEMVEIALQVKPDMVTIVPESREEITTEGGLEVVNNKEKLREIINNLHSAKIQTSIFIDPIEAQIKASKEIGAGWVEIHTGCYANASWEKQEIELAKIKASCAQARSMGLHVNAGHGLTYLNVEPIAAIEGIEELNIGHTIVARALAVGLQNAVKEMKSLVTNPRRNNF.

Asparagine 7 is a 3-amino-2-oxopropyl phosphate binding site. Residue 9 to 10 (DH) participates in 1-deoxy-D-xylulose 5-phosphate binding. Arginine 18 contacts 3-amino-2-oxopropyl phosphate. Histidine 43 (proton acceptor) is an active-site residue. Residues arginine 45 and histidine 50 each contribute to the 1-deoxy-D-xylulose 5-phosphate site. Glutamate 70 acts as the Proton acceptor in catalysis. Residue threonine 100 participates in 1-deoxy-D-xylulose 5-phosphate binding. The Proton donor role is filled by histidine 190. Residues glycine 191 and 212–213 (GH) each bind 3-amino-2-oxopropyl phosphate.

Belongs to the PNP synthase family. As to quaternary structure, homooctamer; tetramer of dimers.

It localises to the cytoplasm. It carries out the reaction 3-amino-2-oxopropyl phosphate + 1-deoxy-D-xylulose 5-phosphate = pyridoxine 5'-phosphate + phosphate + 2 H2O + H(+). It participates in cofactor biosynthesis; pyridoxine 5'-phosphate biosynthesis; pyridoxine 5'-phosphate from D-erythrose 4-phosphate: step 5/5. Catalyzes the complicated ring closure reaction between the two acyclic compounds 1-deoxy-D-xylulose-5-phosphate (DXP) and 3-amino-2-oxopropyl phosphate (1-amino-acetone-3-phosphate or AAP) to form pyridoxine 5'-phosphate (PNP) and inorganic phosphate. This is Pyridoxine 5'-phosphate synthase from Prochlorococcus marinus (strain MIT 9211).